The sequence spans 408 residues: 4-O-methyl-glucuronoyl methylesterase 1 (408 aa).

The first 19 residues, 1–19 (MASSSRFAALLLLALPALA), serve as a signal peptide directing secretion. 3 cysteine pairs are disulfide-bonded: Cys31–Cys65, Cys218–Cys354, and Cys250–Cys326. A GXSYXG catalytic site motif motif is present at residues 217–222 (GCSRDG). Ser219 functions as the Nucleophile in the catalytic mechanism. Lys223, Gln265, and Glu273 together coordinate substrate. Asn287 is a glycosylation site (N-linked (GlcNAc...) asparagine). Trp317 serves as a coordination point for substrate. Residue Asn350 is glycosylated (N-linked (GlcNAc...) asparagine). The Proton donor/acceptor role is filled by His353. Residues Asn390, Asn395, and Asn401 are each glycosylated (N-linked (GlcNAc...) asparagine).

Belongs to the carbohydrate esterase 15 (CE15) family.

It localises to the secreted. The catalysed reaction is a 4-O-methyl-alpha-D-glucuronosyl ester derivative + H2O = 4-O-methyl-alpha-D-glucuronate derivative + an alcohol + H(+). Functionally, glucuronoyl esterase which may play a significant role in biomass degradation, as it is considered to disconnect hemicellulose from lignin through the hydrolysis of the ester bond between 4-O-methyl-D-glucuronic acid residues of glucuronoxylans and aromatic alcohols of lignin. Can hydrolyze benzyl glucuronic acid (BnGlcA), allyl glucuronic acid (allylGlcA) and to a lower degree methyl glucuronic acid (MeGlcA) in vitro. The sequence is that of 4-O-methyl-glucuronoyl methylesterase 1 from Wolfiporia cocos (strain MD-104) (Brown rot fungus).